The chain runs to 120 residues: Ribosome-binding factor A (120 aa).

Belongs to the RbfA family. In terms of assembly, monomer. Binds 30S ribosomal subunits, but not 50S ribosomal subunits or 70S ribosomes.

The protein resides in the cytoplasm. One of several proteins that assist in the late maturation steps of the functional core of the 30S ribosomal subunit. Associates with free 30S ribosomal subunits (but not with 30S subunits that are part of 70S ribosomes or polysomes). Required for efficient processing of 16S rRNA. May interact with the 5'-terminal helix region of 16S rRNA. The chain is Ribosome-binding factor A from Clostridium botulinum (strain Loch Maree / Type A3).